We begin with the raw amino-acid sequence, 746 residues long: Exostosin-1 (746 aa).

The Cytoplasmic segment spans residues 1–7 (MQAKKRY). The chain crosses the membrane as a helical; Signal-anchor for type II membrane protein span at residues 8 to 28 (FILLSAGSCLALLFYFGGLQF). The Lumenal segment spans residues 29–746 (RASRSHSRRE…RKKYRDIERL (718 aa)). Asn89 carries an N-linked (GlcNAc...) asparagine glycan. Intrachain disulfides connect Cys98/Cys103 and Cys109/Cys152. Residues Leu166 and Tyr203 each coordinate a protein. 4 residues coordinate UDP: Lys267, Lys269, Tyr271, and Arg280. A disulfide bond links Cys298 and Cys312. His300 is an a protein binding site. Tyr319 and Tyr324 together coordinate UDP. N-linked (GlcNAc...) asparagine glycosylation is present at Asn330. Intrachain disulfides connect Cys334/Cys355 and Cys652/Cys704. Residues Arg346 and Glu349 each contribute to the UDP site.

The protein belongs to the glycosyltransferase 47 family. In terms of assembly, part of the heparan sulfate polymerase, a dimeric complex composed of EXT1 and EXT2. Could also form homooligomeric complexes. Interacts with NDST1. Post-translationally, N-glycosylated.

The protein resides in the golgi apparatus membrane. It localises to the golgi apparatus. It is found in the cis-Golgi network membrane. Its subcellular location is the endoplasmic reticulum membrane. The enzyme catalyses 3-O-{alpha-D-GlcNAc-[(1-&gt;4)-beta-D-GlcA-(1-&gt;4)-alpha-D-GlcNAc](n)-(1-&gt;4)-beta-D-GlcA-(1-&gt;3)-beta-D-Gal-(1-&gt;3)-beta-D-Gal-(1-&gt;4)-beta-D-Xyl}-L-seryl-[protein] + UDP-alpha-D-glucuronate = 3-O-{[(1-&gt;4)-beta-D-GlcA-(1-&gt;4)-alpha-D-GlcNAc](n+1)-(1-&gt;4)-beta-D-GlcA-(1-&gt;3)-beta-D-Gal-(1-&gt;3)-beta-D-Gal-(1-&gt;4)-beta-D-Xyl}-L-seryl-[protein] + UDP + H(+). Its pathway is protein modification; protein glycosylation. Its function is as follows. Glycosyltransferase forming with EXT2 the heterodimeric heparan sulfate polymerase which catalyzes the elongation of the heparan sulfate glycan backbone. Glycan backbone extension consists in the alternating transfer of (1-&gt;4)-beta-D-GlcA and (1-&gt;4)-alpha-D-GlcNAc residues from their respective UDP-sugar donors. Both EXT1 and EXT2 are required for the full activity of the polymerase since EXT1 bears the N-acetylglucosaminyl-proteoglycan 4-beta-glucuronosyltransferase activity within the complex while EXT2 carries the glucuronosyl-N-acetylglucosaminyl-proteoglycan 4-alpha-N-acetylglucosaminyltransferase activity. Heparan sulfate proteoglycans are ubiquitous components of the extracellular matrix and play an important role in tissue homeostasis and signaling. The protein is Exostosin-1 (EXT1) of Bos taurus (Bovine).